The sequence spans 232 residues: tRNA (guanine-N(7)-)-methyltransferase (232 aa).

S-adenosyl-L-methionine-binding residues include E63, E88, D115, and D137. The active site involves D137. Residues K141, D173, and T211–E214 contribute to the substrate site.

The protein belongs to the class I-like SAM-binding methyltransferase superfamily. TrmB family.

It carries out the reaction guanosine(46) in tRNA + S-adenosyl-L-methionine = N(7)-methylguanosine(46) in tRNA + S-adenosyl-L-homocysteine. Its pathway is tRNA modification; N(7)-methylguanine-tRNA biosynthesis. Catalyzes the formation of N(7)-methylguanine at position 46 (m7G46) in tRNA. This chain is tRNA (guanine-N(7)-)-methyltransferase, found in Chelativorans sp. (strain BNC1).